The following is a 99-amino-acid chain: Plastocyanin (99 aa).

The Plastocyanin-like domain occupies 1-99 (IEILLGGDDG…AGMVGKVTVN (99 aa)). H37, C84, H87, and M92 together coordinate Cu cation.

This sequence belongs to the plastocyanin family. The cofactor is Cu(2+).

It is found in the plastid. The protein resides in the chloroplast thylakoid membrane. Its function is as follows. Participates in electron transfer between P700 and the cytochrome b6-f complex in photosystem I. In Cucumis sativus (Cucumber), this protein is Plastocyanin (PETE).